The primary structure comprises 295 residues: Acetyl-coenzyme A carboxylase carboxyl transferase subunit beta (295 aa).

The interval 1–20 (MSWLSKLMPSGIRTENTPAK) is disordered. Residues 28–295 (LWEKCSNCGS…QPHPQDADAA (268 aa)) form the CoA carboxyltransferase N-terminal domain. The Zn(2+) site is built by Cys-32, Cys-35, Cys-51, and Cys-54. The C4-type zinc finger occupies 32-54 (CSNCGSALYGPELEENLEVCPKC).

This sequence belongs to the AccD/PCCB family. Acetyl-CoA carboxylase is a heterohexamer composed of biotin carboxyl carrier protein (AccB), biotin carboxylase (AccC) and two subunits each of ACCase subunit alpha (AccA) and ACCase subunit beta (AccD). Requires Zn(2+) as cofactor.

Its subcellular location is the cytoplasm. It carries out the reaction N(6)-carboxybiotinyl-L-lysyl-[protein] + acetyl-CoA = N(6)-biotinyl-L-lysyl-[protein] + malonyl-CoA. It functions in the pathway lipid metabolism; malonyl-CoA biosynthesis; malonyl-CoA from acetyl-CoA: step 1/1. Component of the acetyl coenzyme A carboxylase (ACC) complex. Biotin carboxylase (BC) catalyzes the carboxylation of biotin on its carrier protein (BCCP) and then the CO(2) group is transferred by the transcarboxylase to acetyl-CoA to form malonyl-CoA. This chain is Acetyl-coenzyme A carboxylase carboxyl transferase subunit beta, found in Xanthomonas oryzae pv. oryzae (strain MAFF 311018).